A 417-amino-acid chain; its full sequence is NADH-quinone oxidoreductase subunit D (417 aa).

Belongs to the complex I 49 kDa subunit family. In terms of assembly, NDH-1 is composed of 14 different subunits. Subunits NuoB, C, D, E, F, and G constitute the peripheral sector of the complex.

It localises to the cell inner membrane. It catalyses the reaction a quinone + NADH + 5 H(+)(in) = a quinol + NAD(+) + 4 H(+)(out). NDH-1 shuttles electrons from NADH, via FMN and iron-sulfur (Fe-S) centers, to quinones in the respiratory chain. The immediate electron acceptor for the enzyme in this species is believed to be ubiquinone. Couples the redox reaction to proton translocation (for every two electrons transferred, four hydrogen ions are translocated across the cytoplasmic membrane), and thus conserves the redox energy in a proton gradient. The sequence is that of NADH-quinone oxidoreductase subunit D from Coxiella burnetii (strain Dugway 5J108-111).